A 613-amino-acid chain; its full sequence is Alkyldihydroxyacetonephosphate synthase (613 aa).

Positions I126–L307 constitute an FAD-binding PCMH-type domain. FAD contacts are provided by residues P158–N164, D228–T234, A241–S244, and E291–V297. R437 is a substrate binding site. Y498 serves as the catalytic Proton donor/acceptor. An important for enzyme activity region spans residues H534–H536. The disordered stretch occupies residues N572–R593. Positions A611–L613 match the Microbody targeting signal motif.

This sequence belongs to the FAD-binding oxidoreductase/transferase type 4 family. In terms of assembly, homodimer. The cofactor is FAD.

The protein localises to the peroxisome. It catalyses the reaction a long chain fatty alcohol + a 1-acylglycerone 3-phosphate = a 1-O-alkylglycerone 3-phosphate + a long-chain fatty acid + H(+). Its pathway is glycerolipid metabolism; ether lipid biosynthesis. Catalyzes the exchange of an acyl for a long-chain alkyl group and the formation of the ether bond in the biosynthesis of ether phospholipids. The sequence is that of Alkyldihydroxyacetonephosphate synthase from Trypanosoma brucei brucei.